A 208-amino-acid polypeptide reads, in one-letter code: Uracil phosphoribosyltransferase (208 aa).

5-phospho-alpha-D-ribose 1-diphosphate contacts are provided by residues arginine 78, arginine 103, and 130–138 (DPMLATGVS). Uracil is bound by residues isoleucine 193 and 198 to 200 (GDA). Residue aspartate 199 participates in 5-phospho-alpha-D-ribose 1-diphosphate binding.

Belongs to the UPRTase family. Mg(2+) is required as a cofactor.

The catalysed reaction is UMP + diphosphate = 5-phospho-alpha-D-ribose 1-diphosphate + uracil. It functions in the pathway pyrimidine metabolism; UMP biosynthesis via salvage pathway; UMP from uracil: step 1/1. Its activity is regulated as follows. Allosterically activated by GTP. Functionally, catalyzes the conversion of uracil and 5-phospho-alpha-D-ribose 1-diphosphate (PRPP) to UMP and diphosphate. This Thermosipho africanus (strain TCF52B) protein is Uracil phosphoribosyltransferase.